The following is a 345-amino-acid chain: tRNA N6-adenosine threonylcarbamoyltransferase (345 aa).

Fe cation contacts are provided by H111 and H115. Residues 134 to 138, D167, G180, and N277 contribute to the substrate site; that span reads LVSGG. Residue D305 participates in Fe cation binding.

The protein belongs to the KAE1 / TsaD family. Requires Fe(2+) as cofactor.

Its subcellular location is the cytoplasm. The catalysed reaction is L-threonylcarbamoyladenylate + adenosine(37) in tRNA = N(6)-L-threonylcarbamoyladenosine(37) in tRNA + AMP + H(+). Required for the formation of a threonylcarbamoyl group on adenosine at position 37 (t(6)A37) in tRNAs that read codons beginning with adenine. Is involved in the transfer of the threonylcarbamoyl moiety of threonylcarbamoyl-AMP (TC-AMP) to the N6 group of A37, together with TsaE and TsaB. TsaD likely plays a direct catalytic role in this reaction. The sequence is that of tRNA N6-adenosine threonylcarbamoyltransferase from Laribacter hongkongensis (strain HLHK9).